We begin with the raw amino-acid sequence, 100 residues long: Aspartyl/glutamyl-tRNA(Asn/Gln) amidotransferase subunit C (100 aa).

Belongs to the GatC family. Heterotrimer of A, B and C subunits.

The catalysed reaction is L-glutamyl-tRNA(Gln) + L-glutamine + ATP + H2O = L-glutaminyl-tRNA(Gln) + L-glutamate + ADP + phosphate + H(+). It carries out the reaction L-aspartyl-tRNA(Asn) + L-glutamine + ATP + H2O = L-asparaginyl-tRNA(Asn) + L-glutamate + ADP + phosphate + 2 H(+). Allows the formation of correctly charged Asn-tRNA(Asn) or Gln-tRNA(Gln) through the transamidation of misacylated Asp-tRNA(Asn) or Glu-tRNA(Gln) in organisms which lack either or both of asparaginyl-tRNA or glutaminyl-tRNA synthetases. The reaction takes place in the presence of glutamine and ATP through an activated phospho-Asp-tRNA(Asn) or phospho-Glu-tRNA(Gln). The polypeptide is Aspartyl/glutamyl-tRNA(Asn/Gln) amidotransferase subunit C (Rickettsia peacockii (strain Rustic)).